Reading from the N-terminus, the 340-residue chain is Glycerol-3-phosphate dehydrogenase [NAD(P)+] (340 aa).

Ser-11, Trp-12, Arg-33, and Lys-106 together coordinate NADPH. The sn-glycerol 3-phosphate site is built by Lys-106, Gly-137, and Ser-139. Ala-141 serves as a coordination point for NADPH. Sn-glycerol 3-phosphate contacts are provided by Lys-192, Asp-245, Ser-255, Arg-256, and Asn-257. The active-site Proton acceptor is Lys-192. Position 256 (Arg-256) interacts with NADPH. The NADPH site is built by Val-280 and Glu-282.

It belongs to the NAD-dependent glycerol-3-phosphate dehydrogenase family.

The protein resides in the cytoplasm. The catalysed reaction is sn-glycerol 3-phosphate + NAD(+) = dihydroxyacetone phosphate + NADH + H(+). It carries out the reaction sn-glycerol 3-phosphate + NADP(+) = dihydroxyacetone phosphate + NADPH + H(+). Its pathway is membrane lipid metabolism; glycerophospholipid metabolism. In terms of biological role, catalyzes the reduction of the glycolytic intermediate dihydroxyacetone phosphate (DHAP) to sn-glycerol 3-phosphate (G3P), the key precursor for phospholipid synthesis. The protein is Glycerol-3-phosphate dehydrogenase [NAD(P)+] of Bacillus anthracis (strain A0248).